Reading from the N-terminus, the 474-residue chain is Pleckstrin homology domain-containing family S member 1 (474 aa).

Positions 20-135 (EVHKRDYFIK…WVSFMTPYCQ (116 aa)) constitute a PH domain. Disordered stretches follow at residues 232-251 (IAGP…DQGF), 272-321 (STSA…DDQK), and 449-474 (RDLP…AAGE). The segment covering 238–248 (SGDSIESNSPD) has biased composition (polar residues). Basic and acidic residues predominate over residues 449 to 458 (RDLPELERTP).

The polypeptide is Pleckstrin homology domain-containing family S member 1 (Mus musculus (Mouse)).